The primary structure comprises 267 residues: Diphthine synthase (267 aa).

Residues leucine 9, aspartate 85, valine 88, 113 to 114 (SI), leucine 170, alanine 211, and histidine 236 contribute to the S-adenosyl-L-methionine site.

The protein belongs to the diphthine synthase family. Homodimer.

It carries out the reaction 2-[(3S)-amino-3-carboxypropyl]-L-histidyl-[translation elongation factor 2] + 3 S-adenosyl-L-methionine = diphthine-[translation elongation factor 2] + 3 S-adenosyl-L-homocysteine + 3 H(+). The protein operates within protein modification; peptidyl-diphthamide biosynthesis. Its function is as follows. S-adenosyl-L-methionine-dependent methyltransferase that catalyzes the trimethylation of the amino group of the modified target histidine residue in translation elongation factor 2 (EF-2), to form an intermediate called diphthine. The three successive methylation reactions represent the second step of diphthamide biosynthesis. The protein is Diphthine synthase of Methanococcoides burtonii (strain DSM 6242 / NBRC 107633 / OCM 468 / ACE-M).